Consider the following 267-residue polypeptide: Cytochrome b (267 aa).

A run of 4 helical transmembrane segments spans residues 33–53 (FGSL…FLAM), 77–98 (WLIR…FIHV), 113–133 (WNIG…GYVL), and 178–198 (FFAF…VHLL). Positions 83 and 97 each coordinate heme b. Histidine 182 and histidine 196 together coordinate heme b. A ubiquinone is bound at residue histidine 201. A helical membrane pass occupies residues 226 to 246 (IKDLLGVILLLMVLMILVLFF).

It belongs to the cytochrome b family. As to quaternary structure, the cytochrome bc1 complex contains 11 subunits: 3 respiratory subunits (MT-CYB, CYC1 and UQCRFS1), 2 core proteins (UQCRC1 and UQCRC2) and 6 low-molecular weight proteins (UQCRH/QCR6, UQCRB/QCR7, UQCRQ/QCR8, UQCR10/QCR9, UQCR11/QCR10 and a cleavage product of UQCRFS1). This cytochrome bc1 complex then forms a dimer. It depends on heme b as a cofactor.

It localises to the mitochondrion inner membrane. Functionally, component of the ubiquinol-cytochrome c reductase complex (complex III or cytochrome b-c1 complex) that is part of the mitochondrial respiratory chain. The b-c1 complex mediates electron transfer from ubiquinol to cytochrome c. Contributes to the generation of a proton gradient across the mitochondrial membrane that is then used for ATP synthesis. The sequence is that of Cytochrome b (MT-CYB) from Abrothrix olivaceus (Olive grass mouse).